We begin with the raw amino-acid sequence, 244 residues long: MTLDLDAHKKDDKLLITTIQQEYKILAEYKMIESEKLSGIYVIPSYANSLQWFGVFFGRQGLYAESVFRFTILLPDRFPDDKSLPSIIFQQDVIHPHVCPYTHSLDVSHAFPEWRCGEDHLWQLLKYLQVIFSDPLDSIRGIEVDKLKNSEAAELLMNNKEEYVARVQENIKESKEHIFDTPPTEDPHYIVFEKFQQDVHGPVLERIKAGRSKLTEPSAQQANGGHATGLSWVKEGEFKPLSIE.

In terms of domain architecture, UBC core spans 20 to 176 (QQEYKILAEY…VQENIKESKE (157 aa)).

It belongs to the ubiquitin-conjugating enzyme family. FTS subfamily. In terms of assembly, interacts (via N-terminus) with cav/HOAP (via N-terminus); the interaction is direct. Probably interacts (via N-terminus and UBC domain) with ver and moi.

The protein resides in the nucleus. It is found in the nucleolus. It localises to the chromosome. Required for efficient DNA replication, probably through involvement in telomere replication. May have a role in telomere capping of heterochromatic chromosome ends. This chain is Protein pendolino, found in Drosophila melanogaster (Fruit fly).